A 446-amino-acid polypeptide reads, in one-letter code: Trigger factor (446 aa).

One can recognise a PPIase FKBP-type domain in the interval 182–267 (GDKVVVDYQN…VKNIFMMKAI (86 aa)).

It belongs to the FKBP-type PPIase family. Tig subfamily.

It is found in the cytoplasm. It carries out the reaction [protein]-peptidylproline (omega=180) = [protein]-peptidylproline (omega=0). Its function is as follows. Involved in protein export. Acts as a chaperone by maintaining the newly synthesized protein in an open conformation. Functions as a peptidyl-prolyl cis-trans isomerase. This Ehrlichia ruminantium (strain Gardel) protein is Trigger factor.